The primary structure comprises 526 residues: MVAKDYPFYLTVKRANCSLELPPASGPAKDAEEPSNKRVKPLSRVTSLANLIPPVKATPLKRFSQTLQRSISFRSESRPDILAPRPWSRNAAPSSTKRRDSKLWSETFDVCVNQMLTSKEIKRQEAIFELSQGEEDLIEDLKLAKKAYHDPMLKLSIMTEQELNQIFGTLDSLIPLHEELLSQLRDVRKPDGSTEHVGPILVGWLPCLSSYDSYCSNQVAAKALLDHKKQDHRVQDFLQRCLESPFSRKLDLWNFLDIPRSRLVKYPLLLREILRHTPNDNPDQQHLEEAINIIQGIVAEINTKTGESECRYYKERLLYLEEGQKDSLIDSSRVLCCHGELKNNRGVKLHVFLFQEVLVITRAVTHNEQLCYQLYRQPIPVKDLLLEDLQDGEVRLGGSLRGAFSNNERIKNFFRVSFKNGSQSQTHSLQANDTFNKQQWLNCIRQAKETVLCAAGQAGVLDSEGSFLNPTTGSRELQGETKLEQMDQSDSESDCSMDTSEVSLDCERMEQTDSSCGNSRHGESNV.

Positions 20–40 (ELPPASGPAKDAEEPSNKRVK) are disordered. Phosphoserine is present on residues Ser47 and Ser70. The DH domain occupies 122–304 (KRQEAIFELS…QGIVAEINTK (183 aa)). Residues 291–449 (INIIQGIVAE…WLNCIRQAKE (159 aa)) form the PH domain. Positions 464–526 (EGSFLNPTTG…GNSRHGESNV (63 aa)) are disordered. Polar residues predominate over residues 466–475 (SFLNPTTGSR).

Interacts with RHOA and RHOB. As to expression, widely expressed. Highest levels are found in adult brain and skeletal muscle. Lower levels are found in heart and kidney.

It is found in the cytoplasm. Acts as a guanine nucleotide exchange factor (GEF) for RhoA and RhoB GTPases. The polypeptide is Rho guanine nucleotide exchange factor 3 (ARHGEF3) (Homo sapiens (Human)).